The chain runs to 288 residues: Aminoglycoside 6-adenylyltransferase (288 aa).

The catalysed reaction is streptomycin + ATP = 6-O-adenylylstreptomycin + diphosphate. Its function is as follows. Mediates bacterial resistance to streptomycin, is probably a streptomycin 6-adenylyltransferase. This Campylobacter jejuni protein is Aminoglycoside 6-adenylyltransferase.